A 501-amino-acid polypeptide reads, in one-letter code: Phenylalanine--tRNA ligase alpha subunit (501 aa).

L-phenylalanine is bound by residues Thr-340 and Phe-423. Residue Glu-425 coordinates Mg(2+). Phe-448 contacts L-phenylalanine.

This sequence belongs to the class-II aminoacyl-tRNA synthetase family. Phe-tRNA synthetase alpha subunit type 2 subfamily. As to quaternary structure, tetramer of two alpha and two beta subunits. Mg(2+) serves as cofactor.

It is found in the cytoplasm. It carries out the reaction tRNA(Phe) + L-phenylalanine + ATP = L-phenylalanyl-tRNA(Phe) + AMP + diphosphate + H(+). The polypeptide is Phenylalanine--tRNA ligase alpha subunit (Methanococcus maripaludis (strain C5 / ATCC BAA-1333)).